The chain runs to 481 residues: Ribosomal protein uS12 methylthiotransferase RimO (481 aa).

Residues 8–124 (MTVHLVSMGC…IAGRLRTILD (117 aa)) enclose the MTTase N-terminal domain. [4Fe-4S] cluster-binding residues include C17, C53, and C87. The segment at 148 to 188 (PTARAEVSVPGHGTAPDLSASVTPDSGPRATRRRLGTGPSA) is disordered. The Radical SAM core domain maps to 182–413 (LGTGPSAPLK…DLTDELVSQR (232 aa)). 3 residues coordinate [4Fe-4S] cluster: C196, C200, and C203. The TRAM domain occupies 415–480 (EDRIGTRGRV…GVDLVARPAN (66 aa)).

The protein belongs to the methylthiotransferase family. RimO subfamily. The cofactor is [4Fe-4S] cluster.

The protein localises to the cytoplasm. It catalyses the reaction L-aspartate(89)-[ribosomal protein uS12]-hydrogen + (sulfur carrier)-SH + AH2 + 2 S-adenosyl-L-methionine = 3-methylsulfanyl-L-aspartate(89)-[ribosomal protein uS12]-hydrogen + (sulfur carrier)-H + 5'-deoxyadenosine + L-methionine + A + S-adenosyl-L-homocysteine + 2 H(+). Its function is as follows. Catalyzes the methylthiolation of an aspartic acid residue of ribosomal protein uS12. The sequence is that of Ribosomal protein uS12 methylthiotransferase RimO from Cutibacterium acnes (strain DSM 16379 / KPA171202) (Propionibacterium acnes).